The primary structure comprises 130 residues: Protein ApaG (130 aa).

Residues 3–127 (SAVTRGIEVT…FSLDVPEQRR (125 aa)) enclose the ApaG domain.

This is Protein ApaG from Brucella abortus (strain S19).